We begin with the raw amino-acid sequence, 201 residues long: FMN-dependent NADH:quinone oxidoreductase (201 aa).

92–95 is a binding site for FMN; the sequence is MWNL.

This sequence belongs to the azoreductase type 1 family. As to quaternary structure, homodimer. It depends on FMN as a cofactor.

It catalyses the reaction 2 a quinone + NADH + H(+) = 2 a 1,4-benzosemiquinone + NAD(+). The enzyme catalyses N,N-dimethyl-1,4-phenylenediamine + anthranilate + 2 NAD(+) = 2-(4-dimethylaminophenyl)diazenylbenzoate + 2 NADH + 2 H(+). Its function is as follows. Quinone reductase that provides resistance to thiol-specific stress caused by electrophilic quinones. In terms of biological role, also exhibits azoreductase activity. Catalyzes the reductive cleavage of the azo bond in aromatic azo compounds to the corresponding amines. This chain is FMN-dependent NADH:quinone oxidoreductase, found in Caldicellulosiruptor bescii (strain ATCC BAA-1888 / DSM 6725 / KCTC 15123 / Z-1320) (Anaerocellum thermophilum).